Reading from the N-terminus, the 459-residue chain is Glycosyl hydrolase family 109 protein (459 aa).

The tat-type signal signal peptide spans 1–31 (MHNIHRRNFLKAAGAATAGLVTANIALNAYA). Residues 64 to 65 (ER), aspartate 86, 135 to 138 (WEWH), 155 to 156 (EV), and asparagine 184 each bind NAD(+). Residues tyrosine 213, arginine 232, 244 to 247 (YPTH), and tyrosine 326 each bind substrate. Tyrosine 244 contacts NAD(+).

This sequence belongs to the Gfo/Idh/MocA family. Glycosyl hydrolase 109 subfamily. The cofactor is NAD(+). In terms of processing, predicted to be exported by the Tat system. The position of the signal peptide cleavage has not been experimentally proven.

In terms of biological role, glycosidase. In Shewanella baltica (strain OS155 / ATCC BAA-1091), this protein is Glycosyl hydrolase family 109 protein.